A 158-amino-acid polypeptide reads, in one-letter code: Transcription elongation factor GreA (158 aa).

A coiled-coil region spans residues glutamine 4–alanine 75.

The protein belongs to the GreA/GreB family.

Its function is as follows. Necessary for efficient RNA polymerase transcription elongation past template-encoded arresting sites. The arresting sites in DNA have the property of trapping a certain fraction of elongating RNA polymerases that pass through, resulting in locked ternary complexes. Cleavage of the nascent transcript by cleavage factors such as GreA or GreB allows the resumption of elongation from the new 3'terminus. GreA releases sequences of 2 to 3 nucleotides. This chain is Transcription elongation factor GreA, found in Staphylococcus saprophyticus subsp. saprophyticus (strain ATCC 15305 / DSM 20229 / NCIMB 8711 / NCTC 7292 / S-41).